The following is a 377-amino-acid chain: MAVNVNTNVSAMTAQRYLTSATNAQQSSMERLSSGYKINSAKDDAAGLQISNRLNVQSRGLGVAVRNANDGISMAQTAEGAMKETTNILQRMRDLSLQSANGSNSKADRVAIQEEITALNDELNRVAETTSFGGNKLLNGTFATKSFQIGADNGEAVMLNIKDMRSDNALMGGKTYQAANGKDKNWGVEAGKTDLTITLKDKREGDVTISINAKEGDDIEELATYINGQTDMIKASVDEEGKLQLFTDNNRIDGAATFGGALAGELGIGAAQDVTVDTLDVTTVGGAQESVAIVDAALKYVDSHRAELGAFQNRFNHAINNLDNINENVNASKSRIKDTDFAKETTALTKAQILSQASSSVLAQAKQAPNSALALLG.

Coiled coils occupy residues serine 103 to threonine 129 and valine 301 to aspartate 340.

The protein belongs to the bacterial flagellin family. In terms of assembly, heteromer of multiple flagellin subunits including FlaA, FlaB, FlaC, FlaD and FlaE.

Its subcellular location is the secreted. It is found in the bacterial flagellum. In terms of biological role, flagellin is the subunit protein which polymerizes to form the filaments of bacterial flagella. FlaC is not essential for flagellar synthesis and motility. The protein is Flagellin C (flaC) of Vibrio cholerae serotype O1 (strain ATCC 39541 / Classical Ogawa 395 / O395).